Here is a 205-residue protein sequence, read N- to C-terminus: Holliday junction branch migration complex subunit RuvA (205 aa).

The segment at 1 to 64 is domain I; the sequence is MIGKLKGLID…EDQIKLFGFR (64 aa). A domain II region spans residues 65–143; sequence TDHEREWFRL…ALSNVDPAVV (79 aa). The segment at 144-154 is flexible linker; it reads QLSGALDDNRA. The interval 154 to 205 is domain III; that stretch reads APRPVTDAISALVNLGYGQPQAAAAIAAAARAAGDDAATAQLIKLGLKELSK.

Belongs to the RuvA family. In terms of assembly, homotetramer. Forms an RuvA(8)-RuvB(12)-Holliday junction (HJ) complex. HJ DNA is sandwiched between 2 RuvA tetramers; dsDNA enters through RuvA and exits via RuvB. An RuvB hexamer assembles on each DNA strand where it exits the tetramer. Each RuvB hexamer is contacted by two RuvA subunits (via domain III) on 2 adjacent RuvB subunits; this complex drives branch migration. In the full resolvosome a probable DNA-RuvA(4)-RuvB(12)-RuvC(2) complex forms which resolves the HJ.

It is found in the cytoplasm. The RuvA-RuvB-RuvC complex processes Holliday junction (HJ) DNA during genetic recombination and DNA repair, while the RuvA-RuvB complex plays an important role in the rescue of blocked DNA replication forks via replication fork reversal (RFR). RuvA specifically binds to HJ cruciform DNA, conferring on it an open structure. The RuvB hexamer acts as an ATP-dependent pump, pulling dsDNA into and through the RuvAB complex. HJ branch migration allows RuvC to scan DNA until it finds its consensus sequence, where it cleaves and resolves the cruciform DNA. In Rhodopseudomonas palustris (strain BisB5), this protein is Holliday junction branch migration complex subunit RuvA.